The sequence spans 287 residues: 4,4'-diapophytoene synthase (287 aa).

Residues 18–21 (HSKS), Y41, and R45 contribute to the (2E,6E)-farnesyl diphosphate site. 2 residues coordinate Mg(2+): D48 and D52. Q165 is a binding site for (2E,6E)-farnesyl diphosphate. N168 serves as a coordination point for Mg(2+). R171 is a binding site for (2E,6E)-farnesyl diphosphate. D172 is a Mg(2+) binding site. Y248 lines the (2E,6E)-farnesyl diphosphate pocket.

Belongs to the phytoene/squalene synthase family. CrtM subfamily. Mg(2+) serves as cofactor.

It carries out the reaction 2 (2E,6E)-farnesyl diphosphate = 15-cis-4,4'-diapophytoene + 2 diphosphate. It participates in carotenoid biosynthesis; staphyloxanthin biosynthesis; staphyloxanthin from farnesyl diphosphate: step 1/5. Functionally, involved in the biosynthesis of the yellow-orange carotenoid staphyloxanthin, which plays a role in the virulence via its protective function against oxidative stress. Catalyzes the head-to-head condensation of two molecules of farnesyl diphosphate (FPP) into the colorless C(30) carotenoid 4,4'-diapophytoene (dehydrosqualene). This chain is 4,4'-diapophytoene synthase (crtM), found in Staphylococcus aureus (strain Mu50 / ATCC 700699).